A 426-amino-acid polypeptide reads, in one-letter code: Glucose-1-phosphate adenylyltransferase (426 aa).

Alpha-D-glucose 1-phosphate contacts are provided by residues Gly-165, 180-181, and Ser-191; that span reads EK.

Belongs to the bacterial/plant glucose-1-phosphate adenylyltransferase family. As to quaternary structure, homotetramer.

It catalyses the reaction alpha-D-glucose 1-phosphate + ATP + H(+) = ADP-alpha-D-glucose + diphosphate. The protein operates within glycan biosynthesis; glycogen biosynthesis. In terms of biological role, involved in the biosynthesis of ADP-glucose, a building block required for the elongation reactions to produce glycogen. Catalyzes the reaction between ATP and alpha-D-glucose 1-phosphate (G1P) to produce pyrophosphate and ADP-Glc. This chain is Glucose-1-phosphate adenylyltransferase, found in Ruminiclostridium cellulolyticum (strain ATCC 35319 / DSM 5812 / JCM 6584 / H10) (Clostridium cellulolyticum).